Consider the following 135-residue polypeptide: Large ribosomal subunit protein uL18 (135 aa).

The disordered stretch occupies residues 1-23 (MAQTQADTAARKPVGQSVSATRR).

The protein belongs to the universal ribosomal protein uL18 family. As to quaternary structure, part of the 50S ribosomal subunit; part of the 5S rRNA/L5/L18/L25 subcomplex. Contacts the 5S and 23S rRNAs.

In terms of biological role, this is one of the proteins that bind and probably mediate the attachment of the 5S RNA into the large ribosomal subunit, where it forms part of the central protuberance. In Mycobacterium marinum (strain ATCC BAA-535 / M), this protein is Large ribosomal subunit protein uL18.